The chain runs to 5588 residues: Histone-lysine N-methyltransferase 2D (5588 aa).

The interval 1 to 61 (MDSQKPPAED…QKPPHDCSRG (61 aa)) is disordered. The segment at 104-149 (GPCEAVLPKEDASQIGFPEGLTPAHLGEPGGHCWAHHWCAAWSAGV) adopts a C2HC pre-PHD-type 1; degenerate zinc-finger fold. PHD-type zinc fingers lie at residues 170–218 (QRCS…PEHS) and 270–323 (CPEC…CRLC). A PHD-type 2; degenerate zinc finger spans residues 226–276 (EARCAVCEGPGQLCDLLFCTSCGHHYHGACLDTALTARKRASWQCPECKVC). The RING-type 1; atypical zinc finger occupies 229–274 (CAVCEGPGQLCDLLFCTSCGHHYHGACLDTALTARKRASWQCPECK). The RING-type 2; degenerate zinc-finger motif lies at 276-321 (CQSCRKPGNDSKMLVCETCDKGYHTFCLKPPMEDLPAHSWKCKTCR). Disordered regions lie at residues 438–908 (MPLL…SPII) and 922–1315 (LEYP…DDDT). The segment at 439 to 642 (PLLPPPEESP…VSRLSPPPEE (204 aa)) is 15 X 5 AA repeats of S/P-P-P-E/P-E/A. Over residues 440–463 (LLPPPEESPLSPPPEESPTSPPPE) the composition is skewed to pro residues. A run of 4 repeats spans residues 442 to 446 (PPPEE), 460 to 464 (PPPEA), 469 to 473 (PPTEE), and 477 to 481 (SPPPE). Over residues 464 to 475 (ASRLSPPTEESP) the composition is skewed to low complexity. 2 stretches are compositionally biased toward pro residues: residues 490 to 512 (GCPP…PLSP) and 519 to 560 (LSPP…PPPE). Repeat copies occupy residues 520-524 (SPPPE), 529-533 (SPPPE), 538-542 (SPPPE), and 547-551 (SPPPE). Over residues 561-572 (ASRLFPPFEESP) the composition is skewed to low complexity. Positions 573–614 (LSPPPEDSPLSPPPEASRLSPPPEDSPMSPPPEDSPMSPPPE) are enriched in pro residues. 4 repeat units span residues 574-578 (SPPPE), 583-587 (SPPPE), 592-596 (SPPPE), and 610-614 (SPPPE). A compositionally biased stretch (low complexity) spans 619–636 (LPLPVLSHLSPLPEVSRL). Copy 15 of the repeat occupies 637 to 641 (SPPPE). Pro residues predominate over residues 637 to 677 (SPPPEESPLSPPPEDSPASPPPEASRLSPPPEDSPASPPPE). Residues 696-712 (DSLVSLPMEESPLSPLP) are compositionally biased toward low complexity. A Phosphoserine modification is found at Ser727. Low complexity-rich tracts occupy residues 735 to 755 (LCPQ…CLSP), 836 to 851 (PSQS…FSPS), and 876 to 893 (LPEE…LSPQ). 3 stretches are compositionally biased toward pro residues: residues 894–908 (LMPP…SPII), 959–973 (EPVP…PGSP), and 985–1012 (LPPP…PPAL). Residues 1013 to 1023 (PLSVPSPLSPV) are compositionally biased toward low complexity. The span at 1033 to 1045 (AELHEMETDKGPE) shows a compositional bias: basic and acidic residues. PHD-type zinc fingers lie at residues 1071–1124 (PSPA…PMEV), 1121–1171 (PMEV…SQGD), and 1198–1253 (LGVS…SPAR). A Phosphoserine modification is found at Ser1107. Residues 1163–1172 (EISNLSQGDA) are compositionally biased toward polar residues. The segment at 1201–1251 (STDVSPARDEGSLRLCTDSLPETDDSLLCDTGTATSGGKAEGDKGRRRSSP) adopts an RING-type 3; atypical zinc-finger fold. Residue Ser1205 is modified to Phosphoserine. Thr1223 is subject to Phosphothreonine. Ser1226 is modified (phosphoserine). The segment covering 1245 to 1258 (GRRRSSPARSRIKQ) has biased composition (basic residues). Phosphoserine is present on Ser1562. 4 disordered regions span residues 1566–1721 (KRRQ…SKLE), 1751–1846 (GRPG…MESK), 1886–1962 (GLAL…SLQR), and 2095–2641 (SADG…QRQR). Positions 1593–1608 (PDDKKDGDLDTDDLLK) are enriched in basic and acidic residues. Ser1627 is modified (phosphoserine). A compositionally biased stretch (basic and acidic residues) spans 1631–1641 (ELGKEETEESK). Composition is skewed to basic residues over residues 1658–1668 (RQRKSHTRVKR) and 1709–1718 (KQQRRARKKS). A compositionally biased stretch (basic and acidic residues) spans 1762 to 1782 (PRADGGSDRKELMTAMHKGDD). Position 1791 is a phosphoserine (Ser1791). Thr1822 is subject to Phosphothreonine. Positions 1831 to 1846 (DLDRIPTEELPKMESK) are enriched in basic and acidic residues. Low complexity-rich tracts occupy residues 1886–1896 (GLALGSLPSSS) and 1936–1947 (TTPSTPTTPTTE). The span at 2151–2166 (PTYPPYPSPTGAPAQP) shows a compositional bias: pro residues. The segment covering 2170 to 2181 (GTTTRPGTGQPG) has biased composition (low complexity). Residue Ser2196 is modified to Phosphoserine. The residue at position 2197 (Thr2197) is a Phosphothreonine. Lys2203 carries the N6-acetyllysine modification. Ser2217 and Ser2231 each carry phosphoserine. The segment covering 2237–2249 (ESRKSLEVKKEEL) has biased composition (basic and acidic residues). A phosphoserine mark is found at Ser2266, Ser2268, and Ser2299. 2 stretches are compositionally biased toward pro residues: residues 2308–2322 (EPPP…PPSH) and 2331–2359 (YPDP…PPRS). Positions 2366–2388 (SRVPASPQSQSSSQSPLTPRPLS) are enriched in low complexity. A compositionally biased stretch (polar residues) spans 2470-2486 (GQPTNFARSPGTGTFVG). Arg2492 carries the asymmetric dimethylarginine modification. Positions 2504–2514 (LKPPVPQPGLP) are enriched in pro residues. Positions 2546–2557 (PSGSPLGPNSGP) are enriched in low complexity. The residue at position 2597 (Ser2597) is a Phosphoserine. Low complexity predominate over residues 2610–2622 (SSSSLATPELSSA). The stretch at 2627–2665 (ISSLSQTELEKQRQRQRLRELLIRQQIQRNTLRQEKETA) forms a coiled coil. The LXXLL motif 1 signature appears at 2644 to 2648 (LRELL). A disordered region spans residues 2655–2806 (RNTLRQEKET…QLWQQQQQQQ (152 aa)). A compositionally biased stretch (low complexity) spans 2665–2680 (AAAAAGAVGPPGNWGA). 2 stretches are compositionally biased toward polar residues: residues 2691–2704 (SRGQ…QDRS) and 2739–2748 (PSSMDMNSRQ). Positions 2768-2813 (LQQQQQQQQQQQQQQQQQQQQQQQQQQQQQLWQQQQQQQQQQQQQA) form a coiled coil. A compositionally biased stretch (low complexity) spans 2769–2806 (QQQQQQQQQQQQQQQQQQQQQQQQQQQQQLWQQQQQQQ). At Arg2829 the chain carries Asymmetric dimethylarginine. The short motif at 3030–3034 (LDDLL) is the LXXLL motif 2 element. The segment at 3069–3104 (NEKAEREALLRGVEPVSLGPEERPPPAPDNSEPRLT) is disordered. N6-acetyllysine is present on Lys3071. Phosphoserine occurs at positions 3122 and 3193. Disordered stretches follow at residues 3129 to 3193 (NTPK…LNPS) and 3271 to 3326 (QQQQ…QSMV). Residues 3271 to 3284 (QQQQQQQQQQQQQQ) show a composition bias toward low complexity. Lys3430 is subject to N6-acetyllysine. Disordered regions lie at residues 3460–3496 (SGGS…TFAQ), 3593–3617 (RNKQ…VLAV), 3633–3661 (LLPA…GGMV), and 3678–3704 (QQQQ…NLAL). Residues 3559–3613 (EKLKLVTEQQSKIQKQLDQVRKQQKEHTNLMAEYRNKQQQQQQQQQQQQQQQHSA) adopt a coiled-coil conformation. The span at 3596 to 3610 (QQQQQQQQQQQQQQQ) shows a compositional bias: low complexity. The stretch at 3712 to 3747 (RLLQERQLQLQQQRMQLAQKLQQQQQQQQQQQQQQH) forms a coiled coil. The residue at position 3725 (Arg3725) is an Asymmetric dimethylarginine. Disordered regions lie at residues 3760 to 3780 (PGVQ…PSNH) and 3808 to 3827 (LQQQ…QGPH). Coiled coils occupy residues 3854-3883 (RLLT…QQQQ) and 3912-4052 (SLQQ…QVTL). Residues 4053-4249 (GPGLPVKPLQ…QGPPGAGVMP (197 aa)) form a disordered region. Composition is skewed to low complexity over residues 4128-4159 (SQLL…PQPQ), 4172-4183 (GQQLGSGSSSES), and 4226-4240 (GSQP…QSGQ). Arg4255 bears the Asymmetric dimethylarginine mark. Phosphoserine is present on Ser4272. Positions 4279–4283 (LQALL) match the LXXLL motif 3 motif. The segment at 4290 to 4452 (QSQAVRQTPP…SSLVPGHLDQ (163 aa)) is disordered. Residues 4294–4305 (VRQTPPFQEPGT) show a composition bias toward polar residues. Residues 4307-4322 (PSPLQGLLGCQPQPGG) are compositionally biased toward low complexity. Residues 4310-4314 (LQGLL) carry the LXXLL motif 4 motif. Over residues 4379 to 4391 (QLPSPSAQLTPTH) the composition is skewed to polar residues. Ser4410 is modified (phosphoserine). A compositionally biased stretch (polar residues) spans 4432 to 4445 (DNLTEAQKPEQSSL). An LXXLL motif 5 motif is present at residues 4514–4518 (LQKLL). An N6-acetyllysine modification is found at Lys4516. Disordered regions lie at residues 4553–4596 (LQGT…EDGV), 4664–4716 (KNNL…EGAL), and 4729–4778 (AALP…QLGS). The span at 4670–4684 (PPTPPSSLPPTPPPS) shows a compositional bias: pro residues. A Phosphoserine modification is found at Ser4789. Residue Lys4807 forms a Glycyl lysine isopeptide (Lys-Gly) (interchain with G-Cter in SUMO2) linkage. Position 4827 is an N6-acetyllysine (Lys4827). The RING-type 4; degenerate zinc finger occupies 4829–4874 (KGSEVSVMLTVSAAAAKNLNGVMVAVAELLSMKIPNSYEVLFPDGP). Positions 4877–4908 (AGLEPKKGEAEGPGGKEKGLSGKGPDTGPDWL) are disordered. Basic and acidic residues predominate over residues 4879–4896 (LEPKKGEAEGPGGKEKGL). Residue Lys4931 forms a Glycyl lysine isopeptide (Lys-Gly) (interchain with G-Cter in SUMO2) linkage. The interval 4956–5031 (QLSAPPPEEP…SEDSRPPRLK (76 aa)) is disordered. Positions 4959–4982 (APPPEEPSPPPSPLAPSPASPPAE) are enriched in pro residues. Positions 5017–5027 (RPPEESEDSRP) are enriched in basic and acidic residues. The short motif at 5041 to 5045 (LRLLL) is the LXXLL motif 6 element. Residues 5080 to 5120 (NRRCCFCHEEGDGATDGPARLLNLDLDLWVHLNCALWSTEV) form a C2HC pre-PHD-type 2 zinc finger. Residues 5141–5188 (TKCSLCQRTGATSSCNRMRCPNVYHFACAIRAKCMFFKDKTMLCPVHK) form a PHD-type 7 zinc finger. The region spanning 5226-5286 (LHMFRVGGLV…CCYRCSISEN (61 aa)) is the FYR N-terminal domain. The 86-residue stretch at 5287–5372 (NGRPEFVIKV…ESCQNYLFRY (86 aa)) folds into the FYR C-terminal domain. The WDR5 interaction motif (WIN) motif lies at 5388–5393 (GCARSE). An SET domain is found at 5448–5564 (NNVYLARSRI…KGEELTYDYQ (117 aa)). Residues Tyr5502 and 5525–5526 (NH) contribute to the S-adenosyl-L-methionine site. Zn(2+)-binding residues include Cys5528, Cys5576, Cys5578, and Cys5583. One can recognise a Post-SET domain in the interval 5572–5588 (HKIPCHCGAWNCRKWMN).

This sequence belongs to the class V-like SAM-binding methyltransferase superfamily. Histone-lysine methyltransferase family. TRX/MLL subfamily. In terms of assembly, component of the MLL2 complex (also named ASCOM complex), at least composed of catalytic subunit KMT2D/MLL2, ASH2L, RBBP5, WDR5, NCOA6, DPY30, KDM6A, PAXIP1/PTIP, PAGR1 and alpha- and beta-tubulin. Forms a core complex with the evolutionary conserved subcomplex WRAD composed of WDR5, RBBP5, ASH2L/ASH2 and DPY30 subunits; WRAD differentially stimulates the methyltransferase activity. Interacts with ESR1; interaction is direct. Interacts (via WIN motif) with WDR5.

It localises to the nucleus. The catalysed reaction is L-lysyl(4)-[histone H3] + S-adenosyl-L-methionine = N(6)-methyl-L-lysyl(4)-[histone H3] + S-adenosyl-L-homocysteine + H(+). In terms of biological role, histone methyltransferase that catalyzes methyl group transfer from S-adenosyl-L-methionine to the epsilon-amino group of 'Lys-4' of histone H3 (H3K4). Part of chromatin remodeling machinery predominantly forms H3K4me1 methylation marks at active chromatin sites where transcription and DNA repair take place. Acts as a coactivator for estrogen receptor by being recruited by ESR1, thereby activating transcription. The chain is Histone-lysine N-methyltransferase 2D (Kmt2d) from Mus musculus (Mouse).